A 1203-amino-acid polypeptide reads, in one-letter code: Partitioning defective 3 homolog B (1203 aa).

Disordered regions lie at residues 79–104 (FDEQ…PDAF) and 138–162 (RRSS…SGQS). Serine 100 bears the Phosphoserine mark. The span at 152-162 (QPSTASLSGQS) shows a compositional bias: polar residues. The region spanning 201-289 (TRAVEISGEG…SPSVILHVLL (89 aa)) is the PDZ 1 domain. Positions 334-374 (TRASSPEGEEPASPQQSKSPRVPRLGRKPSSPSLSPLMGFG) are disordered. Residues serine 346, serine 352, and serine 368 each carry the phosphoserine modification. PDZ domains lie at 383–468 (KIDL…VIAR) and 496–585 (TLEI…GMIQ). Phosphoserine is present on residues serine 635, serine 710, serine 728, serine 730, serine 746, serine 749, and serine 801. Residues 718 to 732 (GKVQSLADRRSDSPG) show a composition bias toward basic and acidic residues. The disordered stretch occupies residues 718 to 743 (GKVQSLADRRSDSPGKDFGPTLGLKK). Disordered stretches follow at residues 787–927 (KSYD…EKQA), 968–994 (VFRS…PDHL), and 1050–1203 (RPSD…TAAV). The residue at position 810 (threonine 810) is a Phosphothreonine. Over residues 827–842 (VENKAKNIKKTKEKEK) the composition is skewed to basic and acidic residues. The span at 843–854 (KKGKGKLKVKEK) shows a compositional bias: basic residues. Basic and acidic residues-rich tracts occupy residues 855–865 (KLKEEHEDAER), 881–893 (KKDD…EQKG), 906–927 (ERMK…EKQA), and 984–994 (RDGRPLSPDHL). A phosphoserine mark is found at serine 1088 and serine 1182.

The protein belongs to the PAR3 family. As to quaternary structure, interacts with PARD6B. Interacts with INSC/inscuteable.

Its subcellular location is the endomembrane system. The protein resides in the cell junction. It localises to the tight junction. In terms of biological role, putative adapter protein involved in asymmetrical cell division and cell polarization processes. May play a role in the formation of epithelial tight junctions. The protein is Partitioning defective 3 homolog B (Pard3b) of Mus musculus (Mouse).